We begin with the raw amino-acid sequence, 472 residues long: ATP synthase subunit beta (472 aa).

156 to 163 (GGAGVGKT) provides a ligand contact to ATP.

It belongs to the ATPase alpha/beta chains family. As to quaternary structure, F-type ATPases have 2 components, CF(1) - the catalytic core - and CF(0) - the membrane proton channel. CF(1) has five subunits: alpha(3), beta(3), gamma(1), delta(1), epsilon(1). CF(0) has three main subunits: a(1), b(2) and c(9-12). The alpha and beta chains form an alternating ring which encloses part of the gamma chain. CF(1) is attached to CF(0) by a central stalk formed by the gamma and epsilon chains, while a peripheral stalk is formed by the delta and b chains.

Its subcellular location is the cell membrane. It catalyses the reaction ATP + H2O + 4 H(+)(in) = ADP + phosphate + 5 H(+)(out). Produces ATP from ADP in the presence of a proton gradient across the membrane. The catalytic sites are hosted primarily by the beta subunits. This chain is ATP synthase subunit beta, found in Symbiobacterium thermophilum (strain DSM 24528 / JCM 14929 / IAM 14863 / T).